We begin with the raw amino-acid sequence, 255 residues long: MGIKIIIAGFKGKMGQAAYKMVTEDPELELVGLLDPFTDEKEVAGVPVFNAKEELAGLEAHVWVDFTTPKVAYDNTRFALEQGFCPVVGTTGFTPEQLEELITLSREKQLGGLIAPNFALGAVLLMQFAAQAAKYFPNVEIIELHHDQKKDAPSGTAIKTAELISQVRPSKQQGAADEEESIAGARGAYFDGMRIHSVRLPGLVAHQEVIFGSQGEGLTLRHDSYDRASFMTGVNLAIKEVVKRSELVYGLEHLL.

NAD(+) is bound by residues 9 to 14 (GFKGKM), 89 to 91 (GTT), and 115 to 118 (APNF). The active-site Proton donor/acceptor is the H145. Residue H146 coordinates (S)-2,3,4,5-tetrahydrodipicolinate. The Proton donor role is filled by K149. 155–156 (GT) contacts (S)-2,3,4,5-tetrahydrodipicolinate.

Belongs to the DapB family.

It localises to the cytoplasm. The enzyme catalyses (S)-2,3,4,5-tetrahydrodipicolinate + NAD(+) + H2O = (2S,4S)-4-hydroxy-2,3,4,5-tetrahydrodipicolinate + NADH + H(+). It carries out the reaction (S)-2,3,4,5-tetrahydrodipicolinate + NADP(+) + H2O = (2S,4S)-4-hydroxy-2,3,4,5-tetrahydrodipicolinate + NADPH + H(+). The protein operates within amino-acid biosynthesis; L-lysine biosynthesis via DAP pathway; (S)-tetrahydrodipicolinate from L-aspartate: step 4/4. Catalyzes the conversion of 4-hydroxy-tetrahydrodipicolinate (HTPA) to tetrahydrodipicolinate. The chain is 4-hydroxy-tetrahydrodipicolinate reductase from Streptococcus gordonii (strain Challis / ATCC 35105 / BCRC 15272 / CH1 / DL1 / V288).